Reading from the N-terminus, the 424-residue chain is Tyrosine--tRNA ligase (424 aa).

Position 37 (Tyr-37) interacts with L-tyrosine. Positions 42-51 (PTADSLHLGH) match the 'HIGH' region motif. Positions 175 and 179 each coordinate L-tyrosine. The short motif at 235–239 (KFGKT) is the 'KMSKS' region element. Lys-238 lines the ATP pocket. An S4 RNA-binding domain is found at 357–414 (ADLQQALVNAELVPSRGQARTMIGSNAVTINGEKQSNAEYNFSDADRLFGRYTLLRRG).

The protein belongs to the class-I aminoacyl-tRNA synthetase family. TyrS type 1 subfamily. Homodimer.

It localises to the cytoplasm. It carries out the reaction tRNA(Tyr) + L-tyrosine + ATP = L-tyrosyl-tRNA(Tyr) + AMP + diphosphate + H(+). Catalyzes the attachment of tyrosine to tRNA(Tyr) in a two-step reaction: tyrosine is first activated by ATP to form Tyr-AMP and then transferred to the acceptor end of tRNA(Tyr). This chain is Tyrosine--tRNA ligase, found in Serratia proteamaculans (strain 568).